Reading from the N-terminus, the 155-residue chain is Sec-independent protein translocase protein TatB (155 aa).

The helical transmembrane segment at 1–21 threads the bilayer; that stretch reads MFGMGFFEILVVLVVAIIFLG. Residues 109 to 155 are disordered; it reads SLENNAPPKHLNKEVSNREVFHNEPPKEIELIANNNTTKHDKEKEHV. Basic and acidic residues-rich tracts occupy residues 119–138 and 146–155; these read LNKEVSNREVFHNEPPKEIE and TKHDKEKEHV.

This sequence belongs to the TatB family. In terms of assembly, the Tat system comprises two distinct complexes: a TatABC complex, containing multiple copies of TatA, TatB and TatC subunits, and a separate TatA complex, containing only TatA subunits. Substrates initially bind to the TatABC complex, which probably triggers association of the separate TatA complex to form the active translocon.

The protein resides in the cell inner membrane. Functionally, part of the twin-arginine translocation (Tat) system that transports large folded proteins containing a characteristic twin-arginine motif in their signal peptide across membranes. Together with TatC, TatB is part of a receptor directly interacting with Tat signal peptides. TatB may form an oligomeric binding site that transiently accommodates folded Tat precursor proteins before their translocation. This is Sec-independent protein translocase protein TatB from Helicobacter acinonychis (strain Sheeba).